The sequence spans 396 residues: Phosphoglycerate kinase (396 aa).

Residues 21–23, R36, 59–62, R114, and R147 each bind substrate; these read DIN and HFGR. ATP contacts are provided by residues K197, E319, and 349 to 352; that span reads GGDT.

This sequence belongs to the phosphoglycerate kinase family. As to quaternary structure, monomer.

It localises to the cytoplasm. It catalyses the reaction (2R)-3-phosphoglycerate + ATP = (2R)-3-phospho-glyceroyl phosphate + ADP. The protein operates within carbohydrate degradation; glycolysis; pyruvate from D-glyceraldehyde 3-phosphate: step 2/5. The protein is Phosphoglycerate kinase of Jannaschia sp. (strain CCS1).